The sequence spans 178 residues: Fatty-acid and retinol-binding protein 1 (178 aa).

The first 16 residues, 1–16 (MYHQLILLALIGTIMA), serve as a signal peptide directing secretion. Coiled-coil stretches lie at residues 67–89 (DAAL…ELRN) and 129–154 (IKQA…LKVT).

It belongs to the fatty-acid and retinol-binding protein (FARBP) family. In terms of processing, not glycosylated.

It localises to the secreted. Binds retinol and different fatty acids. The protein is Fatty-acid and retinol-binding protein 1 of Loa loa (Eye worm).